The following is a 244-amino-acid chain: High affinity immunoglobulin epsilon receptor subunit beta (244 aa).

Residues 1-59 lie on the Cytoplasmic side of the membrane; it reads MDTESNRRANLALPQEPSSVPAFEVLEISPQEVSSGRLLKSASSPPLHTWLTVLKKEQE. A helical transmembrane segment spans residues 60-79; the sequence is FLGVTQILTAMICLCFGTVV. The Extracellular segment spans residues 80–97; sequence CSVLDISHIEGDIFSSFK. A helical membrane pass occupies residues 98–117; sequence AGYPFWGAIFFSISGMLSII. The Cytoplasmic portion of the chain corresponds to 118-130; sequence SERRNATYLVRGS. A helical membrane pass occupies residues 131–150; the sequence is LGANTASSIAGGTGITILII. Topologically, residues 151–180 are extracellular; the sequence is NLKKSLAYIHIHSCQKFFETKCFMASFSTE. A helical transmembrane segment spans residues 181-200; it reads IVVMMLFLTILGLGSAVSLT. Over 201–244 the chain is Cytoplasmic; sequence ICGAGEELKGNKVPEDRVYEELNIYSATYSELEDPGEMSPPIDL. Tyrosine 219 and tyrosine 225 each carry phosphotyrosine. A Phosphoserine modification is found at serine 226. At tyrosine 229 the chain carries Phosphotyrosine.

Belongs to the MS4A family. Tetramer of an alpha chain, a beta chain, and two disulfide linked gamma chains. Binds LILRB1. Interacts with FGR, FES/FPS and LYN. Phosphorylated on tyrosine residues by LYN. Found on the surface of mast cells and basophils.

It localises to the membrane. Functionally, high affinity receptor that binds to the Fc region of immunoglobulins epsilon. Aggregation of FCER1 by multivalent antigens is required for the full mast cell response, including the release of preformed mediators (such as histamine) by degranulation and de novo production of lipid mediators and cytokines. Also mediates the secretion of important lymphokines. Binding of allergen to receptor-bound IgE leads to cell activation and the release of mediators responsible for the manifestations of allergy. In Homo sapiens (Human), this protein is High affinity immunoglobulin epsilon receptor subunit beta (MS4A2).